The following is a 318-amino-acid chain: MSVWAIGDLQGCYDITQRLLEKINFDPAQDTLWFCGDLVNRGGQSLETLRLVHSLRAHSVVVLGNHDLSLLAIGARSEEEQRKVNPDLLRIVLAEDRDALLDWLRMQKLAHVDRALGWMMIHAGLAPKWTTQMAEKHAREVEQQLQGGGYRKLLRNMYGDQPGWSPGLIGYDRSRAIINLFTRMRYCTPRGRIATDDKGTPGTQAQGLYPWFEVPGRVERDLKIVCGHWSALGLTITQGVHAIDTGAVWGGKLTALQLDTDELRVVQVPGREVTGPAPVARAPRRPRERLGRQRSRGNRGNAGNTAVPAKPPVDTPQD.

The interval 269-318 (PGREVTGPAPVARAPRRPRERLGRQRSRGNRGNAGNTAVPAKPPVDTPQD) is disordered. Residues 282-297 (APRRPRERLGRQRSRG) show a composition bias toward basic residues. The span at 309 to 318 (AKPPVDTPQD) shows a compositional bias: pro residues.

It belongs to the Ap4A hydrolase family.

The catalysed reaction is P(1),P(4)-bis(5'-adenosyl) tetraphosphate + H2O = 2 ADP + 2 H(+). Hydrolyzes diadenosine 5',5'''-P1,P4-tetraphosphate to yield ADP. This chain is Bis(5'-nucleosyl)-tetraphosphatase, symmetrical, found in Xanthomonas oryzae pv. oryzae (strain PXO99A).